A 599-amino-acid polypeptide reads, in one-letter code: Pentatricopeptide repeat-containing protein At3g62540, mitochondrial (599 aa).

The transit peptide at 1-99 directs the protein to the mitochondrion; it reads MAAAPWLYLS…RGFSSGSSNV (99 aa). 10 PPR repeats span residues 194–228, 230–262, 263–293, 297–331, 332–366, 367–401, 402–436, 437–471, 472–506, and 507–541; these read ASRT…GLLT, ETFT…KFKI, GVET…LKER, NMMT…GLKP, DIVA…GPCP, NVRS…GLQP, DAAV…GHPP, DGKT…EIEP, SIHT…GICP, and DDNS…GMKT.

Belongs to the PPR family. P subfamily.

The protein resides in the mitochondrion. The sequence is that of Pentatricopeptide repeat-containing protein At3g62540, mitochondrial from Arabidopsis thaliana (Mouse-ear cress).